The primary structure comprises 294 residues: Ribosomal RNA small subunit methyltransferase H (294 aa).

S-adenosyl-L-methionine contacts are provided by residues 40-42 (GGH), Asp59, Phe86, Asp102, and Gln109.

Belongs to the methyltransferase superfamily. RsmH family.

Its subcellular location is the cytoplasm. The catalysed reaction is cytidine(1402) in 16S rRNA + S-adenosyl-L-methionine = N(4)-methylcytidine(1402) in 16S rRNA + S-adenosyl-L-homocysteine + H(+). In terms of biological role, specifically methylates the N4 position of cytidine in position 1402 (C1402) of 16S rRNA. The sequence is that of Ribosomal RNA small subunit methyltransferase H from Cyanothece sp. (strain PCC 7425 / ATCC 29141).